A 310-amino-acid chain; its full sequence is Olfactory receptor 5P53 (310 aa).

Residues 1–25 (MEAENHTTVAELIILGLTEDPKLCI) lie on the Extracellular side of the membrane. Residue asparagine 5 is glycosylated (N-linked (GlcNAc...) asparagine). The chain crosses the membrane as a helical span at residues 26-46 (VFFVIFLGVYIVTLVGNISII). The Cytoplasmic portion of the chain corresponds to 47–54 (TLIRISSQ). The helical transmembrane segment at 55 to 75 (LHTPMYLFLSHLAFVDILYST) threads the bilayer. Residues 76–99 (SVSVIMHMELLGHGLALPVAACAA) lie on the Extracellular side of the membrane. Cysteine 97 and cysteine 189 form a disulfide bridge. A helical membrane pass occupies residues 100-120 (QLCITVSFGSAECFLLAAMAY). The Cytoplasmic portion of the chain corresponds to 121–133 (DRYVAICSPLLYS). A helical membrane pass occupies residues 134-154 (TLMSPRVCFLLLGMSYVGGCM). At 155 to 196 (NGWTFTGCLLSLSFCGPNQIDHFFCDFSPLLKLSCSDVSIIG) the chain is on the extracellular side. The chain crosses the membrane as a helical span at residues 197-217 (IIPSISSGSIIVVTVFVIAVS). Topologically, residues 218-237 (YIYILITILNMRSTEGRHKA) are cytoplasmic. The helical transmembrane segment at 238–258 (FSTCTSHLTAVTLYYGTITFI) threads the bilayer. The Extracellular portion of the chain corresponds to 259 to 271 (YVMPKSNYSTEQN). N-linked (GlcNAc...) asparagine glycosylation is present at asparagine 265. A helical transmembrane segment spans residues 272-292 (KVLSVFYTVVIPMLNPLIYSL). Topologically, residues 293–310 (RNRDVKEALRKATVRVYS) are cytoplasmic.

Belongs to the G-protein coupled receptor 1 family.

It localises to the cell membrane. Potential odorant receptor. This chain is Olfactory receptor 5P53, found in Mus musculus (Mouse).